We begin with the raw amino-acid sequence, 305 residues long: N-acetyl-D-glucosamine kinase (305 aa).

ATP contacts are provided by residues glycine 4 to lysine 11 and glycine 133 to phenylalanine 140. The Zn(2+) site is built by histidine 157, cysteine 178, cysteine 180, and cysteine 185.

The protein belongs to the ROK (NagC/XylR) family. NagK subfamily.

The catalysed reaction is N-acetyl-D-glucosamine + ATP = N-acetyl-D-glucosamine 6-phosphate + ADP + H(+). The protein operates within cell wall biogenesis; peptidoglycan recycling. Its function is as follows. Catalyzes the phosphorylation of N-acetyl-D-glucosamine (GlcNAc) derived from cell-wall degradation, yielding GlcNAc-6-P. In Histophilus somni (strain 129Pt) (Haemophilus somnus), this protein is N-acetyl-D-glucosamine kinase.